Here is a 418-residue protein sequence, read N- to C-terminus: Sterigmatocystin 8-O-methyltransferase (418 aa).

Positions 1-41 (MTLPNKAALVGLAHTLSEQVKRYLVTADETKSPEDHKLCIE) are excised as a propeptide. 170–176 (MRSAAYF) lines the substrate pocket. Residues 206-225 (LFDYYSTVDEVRGRRFDLGM) are substrate binding. Residues 254–255 (GG), Asp277, 297–298 (DI), and Arg313 contribute to the S-adenosyl-L-methionine site. His317 functions as the Proton acceptor in the catalytic mechanism.

The protein belongs to the class I-like SAM-binding methyltransferase superfamily. Cation-independent O-methyltransferase family. COMT subfamily.

The catalysed reaction is sterigmatocystin + S-adenosyl-L-methionine = 8-O-methylsterigmatocystin + S-adenosyl-L-homocysteine + H(+). The enzyme catalyses dihydrosterigmatocystin + S-adenosyl-L-methionine = 8-O-methyldihydrosterigmatocystin + S-adenosyl-L-homocysteine + H(+). It functions in the pathway mycotoxin biosynthesis; aflatoxin biosynthesis. Its function is as follows. Involved in the conversion of sterigmatocystin to O-methylsterigmatocystin (OMST) and dihydrosterigmatocystin to dihydro-o-methylsterigmatocystin in the aflatoxin biosynthesis pathway. The sequence is that of Sterigmatocystin 8-O-methyltransferase (omtA) from Aspergillus flavus (strain ATCC 200026 / FGSC A1120 / IAM 13836 / NRRL 3357 / JCM 12722 / SRRC 167).